The primary structure comprises 181 residues: UPF0398 protein lmo1889 (181 aa).

The protein belongs to the UPF0398 family.

The sequence is that of UPF0398 protein lmo1889 from Listeria monocytogenes serovar 1/2a (strain ATCC BAA-679 / EGD-e).